The chain runs to 289 residues: 33 kDa chaperonin (289 aa).

Intrachain disulfides connect Cys229–Cys231 and Cys262–Cys265.

The protein belongs to the HSP33 family. Post-translationally, under oxidizing conditions two disulfide bonds are formed involving the reactive cysteines. Under reducing conditions zinc is bound to the reactive cysteines and the protein is inactive.

It is found in the cytoplasm. In terms of biological role, redox regulated molecular chaperone. Protects both thermally unfolding and oxidatively damaged proteins from irreversible aggregation. Plays an important role in the bacterial defense system toward oxidative stress. The polypeptide is 33 kDa chaperonin (Pectobacterium carotovorum subsp. carotovorum (strain PC1)).